The following is a 400-amino-acid chain: Chalcone synthase 7 (400 aa).

The active site involves Cys-168.

Belongs to the thiolase-like superfamily. Chalcone/stilbene synthases family.

It carries out the reaction (E)-4-coumaroyl-CoA + 3 malonyl-CoA + 3 H(+) = 2',4,4',6'-tetrahydroxychalcone + 3 CO2 + 4 CoA. It functions in the pathway secondary metabolite biosynthesis; flavonoid biosynthesis. Its function is as follows. The primary product of this enzyme is 4,2',4',6'-tetrahydroxychalcone (also termed naringenin-chalcone or chalcone) which can under specific conditions spontaneously isomerize into naringenin. In Sorghum bicolor (Sorghum), this protein is Chalcone synthase 7 (CHS7).